The following is a 765-amino-acid chain: Proton-coupled zinc antiporter SLC30A5 (765 aa).

Methionine 1 bears the N-acetylmethionine mark. The Cytoplasmic portion of the chain corresponds to 1–32 (MEEKYGGDVLAGPGGGGGLGPVDVPSARLTKY). A helical transmembrane segment spans residues 33 to 53 (IVLLCFTKFLKAVGLFESYDL). Residues 54–56 (LKA) lie on the Lumenal side of the membrane. Residues 57–77 (VHIVQFIFILKLGTAFFMVLF) form a helical membrane-spanning segment. The Cytoplasmic portion of the chain corresponds to 78–98 (QKPFSSGKTITKHQWIKIFKH). The helical transmembrane segment at 99–119 (AVAGCIISLLWFFGLTLCGPL) threads the bilayer. A topological domain (lumenal) is located at residue arginine 120. The helical transmembrane segment at 121–141 (TLLLFEHSDIVVISLLSVLFT) threads the bilayer. Residues 142 to 152 (SSGGGPAKTRG) are Cytoplasmic-facing. A helical membrane pass occupies residues 153 to 173 (AAFFIIAVICLLLFDNDDLMA). Topologically, residues 174–193 (KMAEHPEGHHDSALTHMLYT) are lumenal. The helical transmembrane segment at 194 to 214 (AIAFLGVADHKGGVLLLVLAL) threads the bilayer. The Cytoplasmic segment spans residues 215 to 238 (CCKVGFHTASRKLSVDVGGAKRLQ). Residues 239-259 (ALSHLVSVLLLCPWVIVLSVT) traverse the membrane as a helical segment. Residues 260–267 (TESKVESW) are Lumenal-facing. A helical membrane pass occupies residues 268 to 288 (FSLIMPFATVIFFVMILDFYV). Residues 289–303 (DSICSVKMEVSKCAR) are Cytoplasmic-facing. The helical transmembrane segment at 304–324 (YGSFPIFISALLFGNFWTHPI) threads the bilayer. Topologically, residues 325-342 (TDQLRAMNKAAHQESTEH) are lumenal. A helical membrane pass occupies residues 343-363 (VLSGGVVVSAIFFILSANILS). The Cytoplasmic portion of the chain corresponds to 364-418 (SPSKRGQKGTLIGYSPEGTPLYNFMGDAFQHSSQSIPRFIKESLKQILEESDSRQ). Residues 419 to 439 (IFYFLCLNLLFTFVELFYGVL) traverse the membrane as a helical segment. The interval 420–640 (FYFLCLNLLF…ILIFLSVVPL (221 aa)) is mediates homodimerization with SLC30A6. The Lumenal segment spans residues 440–448 (TNSLGLISD). The helical transmembrane segment at 449 to 469 (GFHMLFDCSALVMGLFAALMS) threads the bilayer. Residues histidine 451 and aspartate 455 each contribute to the Zn(2+) site. At 470-483 (RWKATRIFSYGYGR) the chain is on the cytoplasmic side. A helical membrane pass occupies residues 484-504 (IEILSGFINGLFLIVIAFFVF). Over 505 to 520 (MESVARLIDPPELDTH) the chain is Lumenal. A helical membrane pass occupies residues 521-541 (MLTPVSVGGLIVNLIGICAFS). The his-rich loop; required for zinc transport stretch occupies residues 542–578 (HAHSHAHGASQGSCHSSDHSHSHHMHGHSDHGHGHSH). Residues 542-592 (HAHSHAHGASQGSCHSSDHSHSHHMHGHSDHGHGHSHGSAGGGMNANMRGV) are Cytoplasmic-facing. The disordered stretch occupies residues 551–581 (SQGSCHSSDHSHSHHMHGHSDHGHGHSHGSA). The chain crosses the membrane as a helical span at residues 593–613 (FLHVLADTLGSIGVIVSTVLI). Residues histidine 595 and aspartate 599 each coordinate Zn(2+). At 614-617 (EQFG) the chain is on the lumenal side. Residues 618–638 (WFIADPLCSLFIAILIFLSVV) form a helical membrane-spanning segment. The Cytoplasmic segment spans residues 639-765 (PLIKDACQVL…KYCKDGTYIM (127 aa)).

This sequence belongs to the cation diffusion facilitator (CDF) transporter (TC 2.A.4) family. SLC30A subfamily. As to quaternary structure, heterodimer with SLC30A6/ZNT6; form a functional zinc ion transmembrane transporter. In terms of processing, could homodimerize through the formation of dityrosine bonds upon oxidative stress. Ubiquitously expressed. Highly expressed in pancreas, liver and kidney. Expressed abundantly in insulin-containing beta cells, undetectable in other endocrine cell types including glucagon-secreting alpha cells and most acinar cells (at protein level).

The protein resides in the golgi apparatus. It is found in the golgi stack membrane. Its subcellular location is the cytoplasmic vesicle. It localises to the COPII-coated vesicle membrane. The protein localises to the secretory vesicle membrane. The protein resides in the trans-Golgi network membrane. It is found in the endoplasmic reticulum membrane. Its subcellular location is the cell membrane. It localises to the apical cell membrane. The enzyme catalyses Zn(2+)(in) + 2 H(+)(out) = Zn(2+)(out) + 2 H(+)(in). In terms of biological role, together with SLC30A6 forms a functional proton-coupled zinc ion antiporter mediating zinc entry into the lumen of organelles along the secretory pathway. By contributing to zinc ion homeostasis within the early secretory pathway, regulates the activation and folding of enzymes like alkaline phosphatases and enzymes involved in phosphatidylinositol glycan anchor biosynthesis. Through the transport of zinc into secretory granules of pancreatic beta-cells, plays an important role in the storage and secretion of insulin. Functionally, zinc ion:proton antiporter mediating influx and efflux of zinc at the plasma membrane. This Homo sapiens (Human) protein is Proton-coupled zinc antiporter SLC30A5.